Here is a 1118-residue protein sequence, read N- to C-terminus: Collagenase ColG (1118 aa).

The first 45 residues, 1–45 (MKKNILKILMDSYSKESKIQTVRRVTSVSLLAVYLTMNTSSLVLA), serve as a signal peptide directing secretion. The propeptide occupies 46 to 110 (KPIENTNDTS…KSKSTLRSAS (65 aa)). The segment at 111–786 (IANTNSEKYD…QYDVVFHGVL (676 aa)) is S1 metalloprotease domain, degrades both FALGPA (furylacryloyl-Leu-Gly-Pro-Ala) and type I collagen. An activator domain required for full activity on collagen region spans residues 119–388 (YDFEYLNGLS…AMERITWDYD (270 aa)). The segment at 389–670 (GIGSNGKKVD…IQELADKYQG (282 aa)) is catalytic subdomain. A degrades soluble FALGPA peptide (furylacryloyl-Leu-Gly-Pro-Ala) but not type I collagen region spans residues 396 to 1118 (KVDHDKFLDD…SGNYELRVNK (723 aa)). Glutamate 498 lines the Ca(2+) pocket. Histidine 523 is a Zn(2+) binding site. Residue glutamate 524 is part of the active site. Histidine 527 serves as a coordination point for Zn(2+). The Ca(2+) site is built by alanine 531, valine 535, and glycine 537. Glutamate 555 provides a ligand contact to Zn(2+). The segment at 679 to 790 (DYLKDHGYKK…VFHGVLTDNA (112 aa)) is helper subdomain. Residues 787–882 (TDNADISNNK…SFTIEIKNED (96 aa)) are S2 domain. Residues asparagine 795, lysine 796, aspartate 823, aspartate 825, aspartate 864, glutamate 890, glutamate 892, asparagine 894, aspartate 913, aspartate 918, alanine 920, aspartate 921, glutamate 1009, glutamate 1011, asparagine 1013, aspartate 1014, serine 1032, aspartate 1037, arginine 1039, and aspartate 1040 each coordinate Ca(2+). Residues 797–885 (APIAKVTGPS…IEIKNEDTTT (89 aa)) enclose the PKD domain. The S3a collagen-binding domain stretch occupies residues 886–1003 (PITKEMEPND…SYSLNIKGLG (118 aa)). The segment at 1008 to 1118 (KEKENNDSSD…SGNYELRVNK (111 aa)) is S3b collagen-binding domain. The segment at 1102–1106 (LVYKY) is collagen-binding.

This sequence belongs to the peptidase M9B family. Collagenase subfamily. Ca(2+) is required as a cofactor. It depends on Zn(2+) as a cofactor. Post-translationally, upon purification gives 67 kDa, 78 kDa, 82 kDa and 116 kDa (full-length) proteins all of which have the same N-terminus; only the longest form digests insoluble collagen. At least 2 in vivo isolated forms (C1b and C1c) are missing the second collagen-binding domain, ending on Lys-1006 and Lys-1018 respectively.

Its subcellular location is the secreted. It carries out the reaction Digestion of native collagen in the triple helical region at Xaa-|-Gly bonds. With synthetic peptides, a preference is shown for Gly at P3 and P1', Pro and Ala at P2 and P2', and hydroxyproline, Ala or Arg at P3'.. With respect to regulation, inhibited by 1-10-phenanthroline. Inhibited by peptidomimetic isoamyl-phosphonyl-Gly-Pro-Ala, which binds to Zn(2+). Inhibited by broad-spectrum zinc metalloprotease inhibitor batimastat. N-aryl mercaptoacetamide-based inhibitors have been isolated that act on clostridial collagenases with submicromolar affinity while having negligibile activity on human collagenases. Clostridial collagenases are among the most efficient degraders of eukaryotic collagen known; saprophytes use collagen as a carbon source while pathogens additionally digest collagen to aid in host colonization. Has both tripeptidylcarboxypeptidase on Gly-X-Y and endopeptidase activities; the endopeptidase cuts within the triple helix region of collagen while tripeptidylcarboxypeptidase successively digests the exposed ends, thus clostridial collagenases can digest large sections of collagen. Active on soluble type I collagen, insoluble collagen, azocoll, soluble PZ-peptide (all collagenase substrates) and gelatin. The full-length protein has collagenase activity, while the in vivo derived C-terminally truncated shorter versions only act on gelatin. In vitro digestion of soluble calf skin collagen fibrils requires both ColG and ColH; ColG forms missing the second collagen-binding domain are also synergistic with ColH, although their overall efficiency is decreased. The activator domain (residues 119-388) and catalytic subdomain (389-670) open and close around substrate using a Gly-rich hinge (387-397), allowing digestion when the protein is closed. Binding of collagen requires Ca(2+) and is inhibited by EGTA; the collagen-binding domain (CBD, S3a plus S3b) specifically recognizes the triple-helical conformation made by 3 collagen protein chains in the triple-helical region. Isolated CBD (S3a plus S3b) binds collagen fibrils and sheets of many tissues. The sequence is that of Collagenase ColG from Hathewaya histolytica (Clostridium histolyticum).